Here is a 334-residue protein sequence, read N- to C-terminus: Beta-hexosaminidase (334 aa).

Substrate contacts are provided by residues Asp57, Arg65, Arg128, and 158–159 (KH). Residue His171 is the Proton donor/acceptor of the active site. Residue Asp242 is the Nucleophile of the active site.

It belongs to the glycosyl hydrolase 3 family. NagZ subfamily.

Its subcellular location is the cytoplasm. It catalyses the reaction Hydrolysis of terminal non-reducing N-acetyl-D-hexosamine residues in N-acetyl-beta-D-hexosaminides.. It functions in the pathway cell wall biogenesis; peptidoglycan recycling. Its function is as follows. Plays a role in peptidoglycan recycling by cleaving the terminal beta-1,4-linked N-acetylglucosamine (GlcNAc) from peptide-linked peptidoglycan fragments, giving rise to free GlcNAc, anhydro-N-acetylmuramic acid and anhydro-N-acetylmuramic acid-linked peptides. In Methylococcus capsulatus (strain ATCC 33009 / NCIMB 11132 / Bath), this protein is Beta-hexosaminidase.